The sequence spans 687 residues: MTTQTLLIELLTEELPPKALNNLGNHFAASVAEGLEKAQLVDGAAEFTAYASPRRLAVQVKNVKAVQADQKIVKKGPAVANAVKDGTPTKALEGFARGAGAKIEDLTIIHDGRQDVYAYEYVQTGRPLGGLLEDIINQAVKKLPIPKVMRWGSSTFTFVRPVHGLIVLHGGDVVNVSVLGLQSGNQTLGHRFLSDGEIIIENADSYAAQMRGQGKVVASFAGRKAAIQTALEGQARRLNATVAADEALLDEVTALVEWPVVLEAGFEEHFLAMPQECLILTMQQNQKYFPLLDQNGKLMNRFLLVSNLQTEDPSHIIRGNERVLRARLSDAEFFYKQDQKATLESRLPKLANVVYHNKIGSQAERIERLQSIAAHIAKALGADAAAAGRAARLAKADLVTEMVGEFPELQGTMGKYYARLDGETEEIAEAIEQHYQPRFAGDKLPESKIAAAVALADKLETLVGIWGIGLIPTGDKDPYALRRAALGILRMLMQYGLDVNELIQTAFDSFPQGLLNEKTPSETADFMQARLAVLLQNDYPQDIVAAVLAKQPRRLDDLTAKLQAVAVFKQLPEAAALAAANKRVQNLLKKADAALGAVNESLLQQDEEKALYAAAQGLQPKIAAAVAEGNFRTALSELASVKPQVDAFFDGVMVMAEDAAVKQNRLNLLNRLAEQMNAVADIALLGE.

Belongs to the class-II aminoacyl-tRNA synthetase family. Tetramer of two alpha and two beta subunits.

Its subcellular location is the cytoplasm. It catalyses the reaction tRNA(Gly) + glycine + ATP = glycyl-tRNA(Gly) + AMP + diphosphate. This chain is Glycine--tRNA ligase beta subunit, found in Neisseria gonorrhoeae (strain NCCP11945).